The primary structure comprises 425 residues: MLDLKFIRDNLDLVKKSIKARGLVLDIDKLVYLDDKRKKIITQIGELNAKRNENSSKMRENLDNVFKSSLMETGKILKKQLIDLEEELKKISFDFDLENKRVPNILSPDVPIGNSEEDNFEIKKVGVVPKFDFKPKDHLELGRDLDLLDFDRAREVSGSKFYYLKNEAVFLEIALINFSLNKLREKGFDVFITPDVAREFIVDGIGFNPRGDESNIYKIESTDKYLVGTSEITLGGYYYNKIIDLTLPIKMAGFSHCFRKEAGAYGQLSKGLYRVHQFSKVEMFCFCKAEESQVIHDEFLSIQEQIFTELEIPYRVLNICSFDLGSPAYKKYDIEAWMPGRDGKGSYGEVTSTSNCTDYQSRRLKIRYKDQDGQNKFAHMVNGTAIATTRVIISILENFQDEKGGVRIPKSLVKYTGFGYIPFKN.

L-serine is bound at residue 229–231 (TSE). ATP-binding positions include 259-261 (RKE) and Val275. Glu282 is an L-serine binding site. 349–352 (EVTS) is an ATP binding site. Thr384 lines the L-serine pocket.

It belongs to the class-II aminoacyl-tRNA synthetase family. Type-1 seryl-tRNA synthetase subfamily. As to quaternary structure, homodimer. The tRNA molecule binds across the dimer.

It localises to the cytoplasm. It catalyses the reaction tRNA(Ser) + L-serine + ATP = L-seryl-tRNA(Ser) + AMP + diphosphate + H(+). The catalysed reaction is tRNA(Sec) + L-serine + ATP = L-seryl-tRNA(Sec) + AMP + diphosphate + H(+). It participates in aminoacyl-tRNA biosynthesis; selenocysteinyl-tRNA(Sec) biosynthesis; L-seryl-tRNA(Sec) from L-serine and tRNA(Sec): step 1/1. Functionally, catalyzes the attachment of serine to tRNA(Ser). Is also able to aminoacylate tRNA(Sec) with serine, to form the misacylated tRNA L-seryl-tRNA(Sec), which will be further converted into selenocysteinyl-tRNA(Sec). The protein is Serine--tRNA ligase of Borrelia garinii subsp. bavariensis (strain ATCC BAA-2496 / DSM 23469 / PBi) (Borreliella bavariensis).